The primary structure comprises 305 residues: Carbonic anhydrase 4 (305 aa).

The first 17 residues, 1-17, serve as a signal peptide directing secretion; the sequence is MQLLLALLALAYVAPST. In terms of domain architecture, Alpha-carbonic anhydrase spans 20–278; the sequence is SGWCYEIQTK…LGKRQVFKSH (259 aa). 2 disulfides stabilise this stretch: Cys-23–Cys-35 and Cys-45–Cys-222. The Proton donor/acceptor role is filled by His-87. Zn(2+)-binding residues include His-114 and His-116. An N-linked (GlcNAc...) asparagine glycan is attached at Asn-123. Position 139 (His-139) interacts with Zn(2+). Asn-214 carries an N-linked (GlcNAc...) asparagine glycan. A substrate-binding site is contributed by 218-219; it reads TT. Ser-277 carries GPI-anchor amidated serine lipidation. Positions 278–305 are cleaved as a propeptide — removed in mature form; that stretch reads HAPGQLLSLPLPTLLVPTLTCLVANFLQ.

The protein belongs to the alpha-carbonic anhydrase family. Interacts with SLC4A4. Requires Zn(2+) as cofactor.

The protein resides in the cell membrane. It carries out the reaction hydrogencarbonate + H(+) = CO2 + H2O. Its activity is regulated as follows. Inhibited by acetazolamide. Catalyzes the reversible hydration of carbon dioxide into bicarbonate and protons and thus is essential to maintaining intracellular and extracellular pH. May stimulate the sodium/bicarbonate transporter activity of SLC4A4 that acts in pH homeostasis. It is essential for acid overload removal from the retina and retina epithelium, and acid release in the choriocapillaris in the choroid. The sequence is that of Carbonic anhydrase 4 (Ca4) from Mus musculus (Mouse).